A 345-amino-acid polypeptide reads, in one-letter code: Succinylglutamate desuccinylase (345 aa).

Residues H64, E67, and H161 each coordinate Zn(2+). The active site involves E225.

The protein belongs to the AspA/AstE family. Succinylglutamate desuccinylase subfamily. Zn(2+) is required as a cofactor.

The catalysed reaction is N-succinyl-L-glutamate + H2O = L-glutamate + succinate. It functions in the pathway amino-acid degradation; L-arginine degradation via AST pathway; L-glutamate and succinate from L-arginine: step 5/5. In terms of biological role, transforms N(2)-succinylglutamate into succinate and glutamate. This chain is Succinylglutamate desuccinylase, found in Shewanella piezotolerans (strain WP3 / JCM 13877).